The following is a 59-amino-acid chain: Large ribosomal subunit protein uL30 (59 aa).

This sequence belongs to the universal ribosomal protein uL30 family. In terms of assembly, part of the 50S ribosomal subunit.

The protein is Large ribosomal subunit protein uL30 of Alkaliphilus metalliredigens (strain QYMF).